The primary structure comprises 132 residues: Small ribosomal subunit protein uS8 (132 aa).

Belongs to the universal ribosomal protein uS8 family. As to quaternary structure, part of the 30S ribosomal subunit. Contacts proteins S5 and S12.

Its function is as follows. One of the primary rRNA binding proteins, it binds directly to 16S rRNA central domain where it helps coordinate assembly of the platform of the 30S subunit. This chain is Small ribosomal subunit protein uS8, found in Bartonella henselae (strain ATCC 49882 / DSM 28221 / CCUG 30454 / Houston 1) (Rochalimaea henselae).